Consider the following 938-residue polypeptide: Protein translocase subunit SecA (938 aa).

ATP-binding positions include Gln-90, 108-112, and Asp-504; that span reads GEGKT.

The protein belongs to the SecA family. In terms of assembly, monomer and homodimer. Part of the essential Sec protein translocation apparatus which comprises SecA, SecYEG and auxiliary proteins SecDF. Other proteins may also be involved.

Its subcellular location is the cell inner membrane. The protein resides in the cellular thylakoid membrane. The protein localises to the cytoplasm. It carries out the reaction ATP + H2O + cellular proteinSide 1 = ADP + phosphate + cellular proteinSide 2.. Functionally, part of the Sec protein translocase complex. Interacts with the SecYEG preprotein conducting channel. Has a central role in coupling the hydrolysis of ATP to the transfer of proteins into and across the cell membrane, serving as an ATP-driven molecular motor driving the stepwise translocation of polypeptide chains across the membrane. Probably participates in protein translocation into and across both the cytoplasmic and thylakoid membranes in cyanobacterial cells. This chain is Protein translocase subunit SecA, found in Picosynechococcus sp. (strain ATCC 27264 / PCC 7002 / PR-6) (Agmenellum quadruplicatum).